A 410-amino-acid chain; its full sequence is MRCAPTAGAALMLCAATAGLLSAQGRPEPPETPRFASWDEVNVLAHGLLQLGHGLREHVERTRGQLGELERRLGACGAACKDPEGSAAPPRAQANLVNPGGGDASPETLRSLKTQLEAQNSRIQQLFQKVAQQQRHLEKQQLRIQNLQSQMDHLAPRHLGHEMAKPARRKRLPKMAQLAGPAHNISRLHRLPRDCQELFEEGERESGLFQIQPQGSPPFLVNCKMTSDGGWTVIQRRQDGSVDFNQPWEAYKDGFGDPQGEFWLGLEKVHHILGDRGSRLAVQLQDWEGNAESLQFPIHLGGEDTAYSLQLTPPVASKLGATTFSPSGLSLPFSTWDQDHDLRGDKNCARSLSGGWWFGTCSHSNLNGQYFHSIPRQRQQRKKGIFWKTWRGRYYPLQATTILVQPTAAS.

The signal sequence occupies residues 1-23; sequence MRCAPTAGAALMLCAATAGLLSA. The segment at 81–106 is disordered; sequence KDPEGSAAPPRAQANLVNPGGGDASP. A coiled-coil region spans residues 107 to 155; it reads ETLRSLKTQLEAQNSRIQQLFQKVAQQQRHLEKQQLRIQNLQSQMDHLA. Asparagine 184 carries N-linked (GlcNAc...) asparagine glycosylation. The region spanning 186-408 is the Fibrinogen C-terminal domain; it reads SRLHRLPRDC…ATTILVQPTA (223 aa). 2 cysteine pairs are disulfide-bonded: cysteine 195–cysteine 223 and cysteine 348–cysteine 361.

In terms of assembly, homooligomer; disulfide-linked via Cys residues in the N-terminal part of the protein. The homooligomer undergoes proteolytic processing to release the ANGPTL4 C-terminal chain, which circulates as a monomer. The homooligomer unprocessed form is able to interact with the extracellular matrix. In terms of processing, N-glycosylated. Forms disulfide-linked dimers and tetramers. Post-translationally, cleaved into a smaller N-terminal chain and a larger chain that contains the fibrinogen C-terminal domain; both cleaved and uncleaved forms are detected in the extracellular space. The cleaved form is not present within the cell.

Its subcellular location is the secreted. The protein localises to the extracellular space. It is found in the extracellular matrix. Mediates inactivation of the lipoprotein lipase LPL, and thereby plays a role in the regulation of triglyceride clearance from the blood serum and in lipid metabolism. May also play a role in regulating glucose homeostasis and insulin sensitivity. Inhibits proliferation, migration, and tubule formation of endothelial cells and reduces vascular leakage. Upon heterologous expression, inhibits the adhesion of endothelial cell to the extracellular matrix (ECM), and inhibits the reorganization of the actin cytoskeleton, formation of actin stress fibers and focal adhesions in endothelial cells that have adhered to ANGPTL4-containing ECM (in vitro). Depending on context, may modulate tumor-related angiogenesis. Functionally, mediates inactivation of the lipoprotein lipase LPL, and thereby plays an important role in the regulation of triglyceride clearance from the blood serum and in lipid metabolism. Has higher activity in LPL inactivation than the uncleaved protein. This chain is Angiopoietin-related protein 4 (ANGPTL4), found in Bos taurus (Bovine).